The following is a 72-amino-acid chain: Defensin-like protein 35 (72 aa).

The N-terminal stretch at 1-22 (MASNKISFSFVLCLYMCSLLDA) is a signal peptide. 3 disulfide bridges follow: Cys-32/Cys-58, Cys-44/Cys-67, and Cys-48/Cys-69.

Belongs to the DEFL family.

The protein resides in the secreted. This chain is Defensin-like protein 35, found in Arabidopsis thaliana (Mouse-ear cress).